A 129-amino-acid chain; its full sequence is Phosphoribosyl-AMP cyclohydrolase (129 aa).

Asp84 contacts Mg(2+). Position 85 (Cys85) interacts with Zn(2+). Asp86 and Asp88 together coordinate Mg(2+). Zn(2+) contacts are provided by Cys101 and Cys108.

The protein belongs to the PRA-CH family. As to quaternary structure, homodimer. Requires Mg(2+) as cofactor. It depends on Zn(2+) as a cofactor.

It is found in the cytoplasm. It catalyses the reaction 1-(5-phospho-beta-D-ribosyl)-5'-AMP + H2O = 1-(5-phospho-beta-D-ribosyl)-5-[(5-phospho-beta-D-ribosylamino)methylideneamino]imidazole-4-carboxamide. It participates in amino-acid biosynthesis; L-histidine biosynthesis; L-histidine from 5-phospho-alpha-D-ribose 1-diphosphate: step 3/9. Catalyzes the hydrolysis of the adenine ring of phosphoribosyl-AMP. This is Phosphoribosyl-AMP cyclohydrolase from Halobacterium salinarum (strain ATCC 700922 / JCM 11081 / NRC-1) (Halobacterium halobium).